Reading from the N-terminus, the 481-residue chain is uncharacterized protein (481 aa).

The protein to M.tuberculosis RV2411c.

This is an uncharacterized protein from Synechocystis sp. (strain ATCC 27184 / PCC 6803 / Kazusa).